A 360-amino-acid chain; its full sequence is Peptide chain release factor 1 (360 aa).

Glutamine 235 is subject to N5-methylglutamine.

The protein belongs to the prokaryotic/mitochondrial release factor family. In terms of processing, methylated by PrmC. Methylation increases the termination efficiency of RF1.

It localises to the cytoplasm. Peptide chain release factor 1 directs the termination of translation in response to the peptide chain termination codons UAG and UAA. The chain is Peptide chain release factor 1 from Delftia acidovorans (strain DSM 14801 / SPH-1).